A 574-amino-acid polypeptide reads, in one-letter code: Septation ring formation regulator EzrA (574 aa).

Residues 1 to 7 (MSSGIIL) lie on the Extracellular side of the membrane. Residues 8-26 (LIVAIVLLVIIAYLVGVII) form a helical membrane-spanning segment. At 27 to 574 (RKRNDSLITS…YEKTREHIRF (548 aa)) the chain is on the cytoplasmic side. 3 coiled-coil regions span residues 102 to 141 (NFIRAKHEINSVESQLNLVEEDIASIREALNILKEQEEKN), 274 to 350 (ELVT…ETES), and 459 to 520 (QLEA…SFEA).

Belongs to the EzrA family.

It is found in the cell membrane. Its function is as follows. Negative regulator of FtsZ ring formation; modulates the frequency and position of FtsZ ring formation. Inhibits FtsZ ring formation at polar sites. Interacts either with FtsZ or with one of its binding partners to promote depolymerization. The polypeptide is Septation ring formation regulator EzrA (Streptococcus pyogenes serotype M6 (strain ATCC BAA-946 / MGAS10394)).